A 651-amino-acid chain; its full sequence is Carboxypeptidase S1 homolog A (651 aa).

A signal peptide spans 1–19 (MHLATGLAVALPFIGAASA). Cys50 and Cys121 are disulfide-bonded. 6 N-linked (GlcNAc...) asparagine glycosylation sites follow: Asn77, Asn125, Asn128, Asn161, Asn184, and Asn202. Residue Ser238 is part of the active site. N-linked (GlcNAc...) asparagine glycans are attached at residues Asn260, Asn299, Asn308, Asn347, and Asn410. 2 disulfide bridges follow: Cys325/Cys361 and Cys332/Cys354. Residue Asp458 is part of the active site. Position 461 (Cys461) interacts with substrate. N-linked (GlcNAc...) asparagine glycans are attached at residues Asn474 and Asn504. His515 is an active-site residue. Glu516 contacts substrate. Positions 604–630 (KSPAGKKQGPPPTSTSPPSPTSSSEGS) are disordered. Over residues 612–623 (GPPPTSTSPPSP) the composition is skewed to pro residues. Ser625 carries GPI-anchor amidated serine lipidation. A propeptide spans 626-651 (SSEGSVKEFSVSVLGVSVLAAITFFL) (removed in mature form).

It belongs to the peptidase S10 family.

Its subcellular location is the cell membrane. The enzyme catalyses Preferential release of a C-terminal arginine or lysine residue.. Functionally, extracellular serine carboxypeptidase that contributes to pathogenicity. The sequence is that of Carboxypeptidase S1 homolog A (SCPA) from Arthroderma otae (strain ATCC MYA-4605 / CBS 113480) (Microsporum canis).